Here is a 401-residue protein sequence, read N- to C-terminus: Leucine aminopeptidase 1 (401 aa).

The first 18 residues, 1 to 18 (MKVAKASLLTILAHSVSA), serve as a signal peptide directing secretion. A propeptide spanning residues 19–87 (RFLAEDEINR…GATRLRTKTK (69 aa)) is cleaved from the precursor. An N-linked (GlcNAc...) asparagine glycan is attached at asparagine 179. 4 residues coordinate Zn(2+): histidine 187, aspartate 206, glutamate 245, and aspartate 272. Cysteine 321 and cysteine 325 are disulfide-bonded. Histidine 354 serves as a coordination point for Zn(2+).

This sequence belongs to the peptidase M28 family. M28E subfamily. In terms of assembly, monomer. The cofactor is Zn(2+).

The protein localises to the secreted. Extracellular aminopeptidase that allows assimilation of proteinaceous substrates. The sequence is that of Leucine aminopeptidase 1 (LAP1) from Colletotrichum graminicola (strain M1.001 / M2 / FGSC 10212) (Maize anthracnose fungus).